The sequence spans 161 residues: Putative 4-hydroxy-4-methyl-2-oxoglutarate aldolase (161 aa).

Substrate-binding positions include 75-78 and R97; that span reads GDQL. An a divalent metal cation-binding site is contributed by D98.

It belongs to the class II aldolase/RraA-like family. As to quaternary structure, homotrimer. A divalent metal cation serves as cofactor.

The catalysed reaction is 4-hydroxy-4-methyl-2-oxoglutarate = 2 pyruvate. It carries out the reaction oxaloacetate + H(+) = pyruvate + CO2. In terms of biological role, catalyzes the aldol cleavage of 4-hydroxy-4-methyl-2-oxoglutarate (HMG) into 2 molecules of pyruvate. Also contains a secondary oxaloacetate (OAA) decarboxylase activity due to the common pyruvate enolate transition state formed following C-C bond cleavage in the retro-aldol and decarboxylation reactions. This is Putative 4-hydroxy-4-methyl-2-oxoglutarate aldolase from Vibrio cholerae serotype O1 (strain ATCC 39315 / El Tor Inaba N16961).